Here is a 385-residue protein sequence, read N- to C-terminus: Aspartate/prephenate aminotransferase (385 aa).

L-aspartate contacts are provided by Gly-39, Trp-125, and Asn-175. Lys-234 is subject to N6-(pyridoxal phosphate)lysine. Residue Arg-361 coordinates L-aspartate.

The protein belongs to the class-I pyridoxal-phosphate-dependent aminotransferase family. As to quaternary structure, homodimer. Pyridoxal 5'-phosphate is required as a cofactor.

The protein resides in the cytoplasm. The catalysed reaction is L-aspartate + 2-oxoglutarate = oxaloacetate + L-glutamate. The enzyme catalyses L-arogenate + oxaloacetate = prephenate + L-aspartate. Functionally, catalyzes the reversible conversion of aspartate and 2-oxoglutarate to glutamate and oxaloacetate. Can also transaminate prephenate in the presence of aspartate. The polypeptide is Aspartate/prephenate aminotransferase (aspC) (Thermus thermophilus (strain ATCC 27634 / DSM 579 / HB8)).